Here is a 48-residue protein sequence, read N- to C-terminus: MKKNFWFWGFTDSAETWNGRFAMIGFMAVIFIELVTGKGLLYLSGLMN.

This sequence belongs to the ELIP/psbS family.

It is found in the plastid. It localises to the chloroplast. Its function is as follows. Possible role in chlorophyll and/or carotenoid binding. This is an uncharacterized protein from Porphyra purpurea (Red seaweed).